Consider the following 130-residue polypeptide: Small ribosomal subunit protein uS11 (130 aa).

It belongs to the universal ribosomal protein uS11 family. Part of the 30S ribosomal subunit. Interacts with proteins S7 and S18. Binds to IF-3.

Its function is as follows. Located on the platform of the 30S subunit, it bridges several disparate RNA helices of the 16S rRNA. Forms part of the Shine-Dalgarno cleft in the 70S ribosome. This is Small ribosomal subunit protein uS11 from Campylobacter lari (strain RM2100 / D67 / ATCC BAA-1060).